Here is a 671-residue protein sequence, read N- to C-terminus: DNA ligase (671 aa).

NAD(+) contacts are provided by residues 31-35 (DAEYD), 80-81 (SL), and Glu110. Catalysis depends on Lys112, which acts as the N6-AMP-lysine intermediate. Residues Arg133, Glu167, Lys283, and Lys307 each contribute to the NAD(+) site. Residues Cys401, Cys404, Cys419, and Cys424 each coordinate Zn(2+). The BRCT domain occupies 587–671 (EEELVFAGKT…YLPDEGGLNE (85 aa)).

This sequence belongs to the NAD-dependent DNA ligase family. LigA subfamily. Requires Mg(2+) as cofactor. The cofactor is Mn(2+).

It catalyses the reaction NAD(+) + (deoxyribonucleotide)n-3'-hydroxyl + 5'-phospho-(deoxyribonucleotide)m = (deoxyribonucleotide)n+m + AMP + beta-nicotinamide D-nucleotide.. DNA ligase that catalyzes the formation of phosphodiester linkages between 5'-phosphoryl and 3'-hydroxyl groups in double-stranded DNA using NAD as a coenzyme and as the energy source for the reaction. It is essential for DNA replication and repair of damaged DNA. In Listeria monocytogenes serotype 4a (strain HCC23), this protein is DNA ligase.